A 1077-amino-acid chain; its full sequence is Disheveled-associated activator of morphogenesis 1 (1077 aa).

Ser34 carries the post-translational modification Phosphoserine. The GBD/FH3 domain maps to 45 to 420; the sequence is LPMPPVEELD…QIVIQNDKGQ (376 aa). The stretch at 437-526 forms a coiled coil; sequence RMLVNENEVK…ELNRRAVCAA (90 aa). Disordered stretches follow at residues 457 to 478 and 526 to 596; these read KEHN…AKTQ and AVPG…PVSL. The region spanning 528–599 is the FH1 domain; that stretch reads PGGPSPGAPG…PGAPVSLTLK (72 aa). 2 stretches are compositionally biased toward pro residues: residues 530 to 539 and 549 to 592; these read GPSPGAPGGP and LPPP…PPGA. The region spanning 600 to 1008 is the FH2 domain; sequence KKNIPQPTNA…EERRARLEAQ (409 aa). An actin-binding region spans residues 693-702; that stretch reads QNCNILLSRL. The segment covering 1007–1026 has biased composition (basic and acidic residues); it reads AQLKEQRERERKVRKAKESS. Disordered stretches follow at residues 1007-1033 and 1056-1077; these read AQLK…GEFD and RKRI…KLNF. Phosphoserine is present on residues Ser1026 and Ser1029. One can recognise a DAD domain in the interval 1026–1057; sequence SEESGEFDDLVSALRSGEVFDKDLSKLKRNRK. Residues 1066-1077 show a composition bias toward basic and acidic residues; it reads SSRERPITKLNF.

The protein belongs to the formin homology family. In terms of assembly, interacts with CIP4, FNBP1 and FNBP1L. Interacts with the SH3 domains of Abl, BTK, endophilin, spectrin and SRC. Binds specifically to GTP-bound CDC42 and RHOA. Interacts with INTU; INTU mediates the indirect interaction between DAAM1 and NPHP4. Interacts (via coiled coil domain) with KANK1 (via coiled coil domain). In terms of tissue distribution, in early embryogenesis, expressed in embryonic and extraembryonic ectoderm. In later stages of gastrulation, expressed also in somites and ribs and posterior vertebrae of developing skeletal system. During organogenesis, expressed in CNS, PNS, stomach, liver and limb bud.

The protein resides in the cytoplasm. The protein localises to the cytoskeleton. It is found in the cilium basal body. In terms of biological role, binds to disheveled (Dvl) and Rho, and mediates Wnt-induced Dvl-Rho complex formation. May play a role as a scaffolding protein to recruit Rho-GDP and Rho-GEF, thereby enhancing Rho-GTP formation. Can direct nucleation and elongation of new actin filaments. Involved in building functional cilia. Involved in the organization of the subapical actin network in multiciliated epithelial cells. Together with DAAM2, required for myocardial maturation and sarcomere assembly. During cell division, may regulate RHOA activation that signals spindle orientation and chromosomal segregation. The sequence is that of Disheveled-associated activator of morphogenesis 1 (Daam1) from Mus musculus (Mouse).